The sequence spans 613 residues: Leucine aminopeptidase 2 (613 aa).

Residues 134–136 and 265–270 each bind a peptide; these read QAQ and PYGGME. His294 contacts Zn(2+). Glu295 acts as the Proton acceptor in catalysis. Zn(2+)-binding residues include His298 and Glu317. The active-site Proton donor is the Tyr382.

Belongs to the peptidase M1 family. Requires Zn(2+) as cofactor.

The protein localises to the cytoplasm. It is found in the nucleus. The enzyme catalyses an epoxide + H2O = an ethanediol. Functionally, aminopeptidase that preferentially cleaves di- and tripeptides. Also has low epoxide hydrolase activity (in vitro). Can hydrolyze the epoxide leukotriene LTA(4) but it forms preferentially 5,6-dihydroxy-7,9,11,14-eicosatetraenoic acid rather than the cytokine leukotriene B(4) as the product compared to the homologous mammalian enzyme (in vitro). This chain is Leucine aminopeptidase 2, found in Pyricularia oryzae (strain 70-15 / ATCC MYA-4617 / FGSC 8958) (Rice blast fungus).